We begin with the raw amino-acid sequence, 385 residues long: Ethanolamine kinase 2 (385 aa).

This sequence belongs to the choline/ethanolamine kinase family.

The catalysed reaction is ethanolamine + ATP = phosphoethanolamine + ADP + H(+). It participates in phospholipid metabolism; phosphatidylethanolamine biosynthesis; phosphatidylethanolamine from ethanolamine: step 1/3. Its function is as follows. Highly specific for ethanolamine phosphorylation. Does not have choline kinase activity. The polypeptide is Ethanolamine kinase 2 (Etnk2) (Rattus norvegicus (Rat)).